The chain runs to 382 residues: uncharacterized protein (382 aa).

Residues 1-92 (MQFLSVIPEQ…GATAYRNTEF (92 aa)) enclose the PE domain. Transmembrane regions (helical) follow at residues 23 to 43 (SALS…VSAA), 155 to 175 (AAVA…NGVV), 203 to 223 (FIVA…AVVG), 230 to 250 (TFLT…LAGV), 261 to 281 (LASG…VQLF), 284 to 304 (AFLL…IAVV), 315 to 335 (LVVP…AQFA), and 347 to 367 (LGAP…QGIG).

The protein belongs to the mycobacterial PE family.

Its subcellular location is the cell membrane. This is an uncharacterized protein from Mycobacterium bovis (strain ATCC BAA-935 / AF2122/97).